We begin with the raw amino-acid sequence, 436 residues long: Eukaryotic peptide chain release factor subunit 1-1 (436 aa).

This sequence belongs to the eukaryotic release factor 1 family. Heterodimer of two subunits, one of which binds GTP.

The protein resides in the cytoplasm. Functionally, directs the termination of nascent peptide synthesis (translation) in response to the termination codons UAA, UAG and UGA. Modulates plant growth and development. This is Eukaryotic peptide chain release factor subunit 1-1 (ERF1-1) from Arabidopsis thaliana (Mouse-ear cress).